The sequence spans 200 residues: Probable molybdenum cofactor guanylyltransferase (200 aa).

GTP-binding positions include 9-11 (LAG), K21, D69, and D100. Residue D100 participates in Mg(2+) binding.

This sequence belongs to the MobA family. It depends on Mg(2+) as a cofactor.

Its subcellular location is the cytoplasm. It carries out the reaction Mo-molybdopterin + GTP + H(+) = Mo-molybdopterin guanine dinucleotide + diphosphate. In terms of biological role, transfers a GMP moiety from GTP to Mo-molybdopterin (Mo-MPT) cofactor (Moco or molybdenum cofactor) to form Mo-molybdopterin guanine dinucleotide (Mo-MGD) cofactor. In Bacillus cereus (strain AH820), this protein is Probable molybdenum cofactor guanylyltransferase.